The sequence spans 250 residues: 3-deoxy-manno-octulosonate cytidylyltransferase (250 aa).

Belongs to the KdsB family.

Its subcellular location is the cytoplasm. The catalysed reaction is 3-deoxy-alpha-D-manno-oct-2-ulosonate + CTP = CMP-3-deoxy-beta-D-manno-octulosonate + diphosphate. It functions in the pathway nucleotide-sugar biosynthesis; CMP-3-deoxy-D-manno-octulosonate biosynthesis; CMP-3-deoxy-D-manno-octulosonate from 3-deoxy-D-manno-octulosonate and CTP: step 1/1. The protein operates within bacterial outer membrane biogenesis; lipopolysaccharide biosynthesis. Functionally, activates KDO (a required 8-carbon sugar) for incorporation into bacterial lipopolysaccharide in Gram-negative bacteria. The protein is 3-deoxy-manno-octulosonate cytidylyltransferase of Janthinobacterium sp. (strain Marseille) (Minibacterium massiliensis).